A 430-amino-acid chain; its full sequence is Asparagine--tRNA ligase (430 aa).

It belongs to the class-II aminoacyl-tRNA synthetase family.

The protein resides in the cytoplasm. It catalyses the reaction tRNA(Asn) + L-asparagine + ATP = L-asparaginyl-tRNA(Asn) + AMP + diphosphate + H(+). The polypeptide is Asparagine--tRNA ligase (Thermococcus gammatolerans (strain DSM 15229 / JCM 11827 / EJ3)).